The primary structure comprises 209 residues: MSNVHLVDHPLVQHKLTLMRRKDASTNSFRRLLNEISMLMAYEVTRDMPMQDIEVETPLETMQAKVIDGKKLVLVSILRAGTGILDGMLTVVPGARVGHIGLYRDPKTLTAVEYYFKMPGEMENRDVIVVDPMLATGNSAVAAVERLKELNPKSIKFVCLLTCPEGLATMQKAHPDVPVYTAAIDRELNSHGYILPGLGDAGDRIFGTK.

Residues arginine 79, arginine 104, and 131-139 each bind 5-phospho-alpha-D-ribose 1-diphosphate; that span reads DPMLATGNS. Uracil-binding positions include isoleucine 194 and 199–201; that span reads GDA. Residue aspartate 200 participates in 5-phospho-alpha-D-ribose 1-diphosphate binding.

Belongs to the UPRTase family. It depends on Mg(2+) as a cofactor.

It catalyses the reaction UMP + diphosphate = 5-phospho-alpha-D-ribose 1-diphosphate + uracil. It functions in the pathway pyrimidine metabolism; UMP biosynthesis via salvage pathway; UMP from uracil: step 1/1. With respect to regulation, allosterically activated by GTP. Functionally, catalyzes the conversion of uracil and 5-phospho-alpha-D-ribose 1-diphosphate (PRPP) to UMP and diphosphate. This chain is Uracil phosphoribosyltransferase, found in Variovorax paradoxus (strain S110).